Reading from the N-terminus, the 383-residue chain is 2-aminoethylphosphonate--pyruvate transaminase (383 aa).

K192 is modified (N6-(pyridoxal phosphate)lysine).

This sequence belongs to the class-V pyridoxal-phosphate-dependent aminotransferase family. PhnW subfamily. In terms of assembly, homodimer. The cofactor is pyridoxal 5'-phosphate.

It catalyses the reaction (2-aminoethyl)phosphonate + pyruvate = phosphonoacetaldehyde + L-alanine. In terms of biological role, involved in phosphonate degradation. This chain is 2-aminoethylphosphonate--pyruvate transaminase, found in Rhizobium meliloti (strain 1021) (Ensifer meliloti).